A 343-amino-acid polypeptide reads, in one-letter code: Phenylalanine--tRNA ligase alpha subunit (343 aa).

A Mg(2+)-binding site is contributed by Glu264.

Belongs to the class-II aminoacyl-tRNA synthetase family. Phe-tRNA synthetase alpha subunit type 1 subfamily. As to quaternary structure, tetramer of two alpha and two beta subunits. It depends on Mg(2+) as a cofactor.

The protein localises to the cytoplasm. It carries out the reaction tRNA(Phe) + L-phenylalanine + ATP = L-phenylalanyl-tRNA(Phe) + AMP + diphosphate + H(+). The polypeptide is Phenylalanine--tRNA ligase alpha subunit (Aromatoleum aromaticum (strain DSM 19018 / LMG 30748 / EbN1) (Azoarcus sp. (strain EbN1))).